Consider the following 200-residue polypeptide: Dephospho-CoA kinase (200 aa).

Positions 4–200 constitute a DPCK domain; sequence VIGLTGGIAS…AILKKWNIID (197 aa). 12-17 lines the ATP pocket; that stretch reads ASGKST.

Belongs to the CoaE family.

It localises to the cytoplasm. It carries out the reaction 3'-dephospho-CoA + ATP = ADP + CoA + H(+). The protein operates within cofactor biosynthesis; coenzyme A biosynthesis; CoA from (R)-pantothenate: step 5/5. In terms of biological role, catalyzes the phosphorylation of the 3'-hydroxyl group of dephosphocoenzyme A to form coenzyme A. The protein is Dephospho-CoA kinase of Bacillus cereus (strain ZK / E33L).